The sequence spans 205 residues: Large ribosomal subunit protein uL3 (205 aa).

The protein belongs to the universal ribosomal protein uL3 family. In terms of assembly, part of the 50S ribosomal subunit. Forms a cluster with proteins L14 and L19.

Its function is as follows. One of the primary rRNA binding proteins, it binds directly near the 3'-end of the 23S rRNA, where it nucleates assembly of the 50S subunit. The polypeptide is Large ribosomal subunit protein uL3 (Thermosipho melanesiensis (strain DSM 12029 / CIP 104789 / BI429)).